The primary structure comprises 631 residues: Phosphomethylpyrimidine synthase (631 aa).

Substrate-binding positions include asparagine 239, methionine 268, tyrosine 297, histidine 333, 353–355 (SRG), 394–397 (DGLR), and glutamate 433. A Zn(2+)-binding site is contributed by histidine 437. Residue tyrosine 460 coordinates substrate. Histidine 501 is a binding site for Zn(2+). The [4Fe-4S] cluster site is built by cysteine 581, cysteine 584, and cysteine 589.

The protein belongs to the ThiC family. Homodimer. The cofactor is [4Fe-4S] cluster.

It catalyses the reaction 5-amino-1-(5-phospho-beta-D-ribosyl)imidazole + S-adenosyl-L-methionine = 4-amino-2-methyl-5-(phosphooxymethyl)pyrimidine + CO + 5'-deoxyadenosine + formate + L-methionine + 3 H(+). The protein operates within cofactor biosynthesis; thiamine diphosphate biosynthesis. Functionally, catalyzes the synthesis of the hydroxymethylpyrimidine phosphate (HMP-P) moiety of thiamine from aminoimidazole ribotide (AIR) in a radical S-adenosyl-L-methionine (SAM)-dependent reaction. The protein is Phosphomethylpyrimidine synthase of Salmonella paratyphi C (strain RKS4594).